A 368-amino-acid polypeptide reads, in one-letter code: Protein-glutamate methylesterase/protein-glutamine glutaminase 1 (368 aa).

Positions lysine 4–leucine 121 constitute a Response regulatory domain. Aspartate 55 carries the 4-aspartylphosphate modification. Residues serine 138–serine 176 are disordered. The segment covering serine 144 to serine 176 has biased composition (low complexity). Residues proline 172–glutamine 368 enclose the CheB-type methylesterase domain. Active-site residues include serine 192, histidine 219, and aspartate 312.

It belongs to the CheB family. Post-translationally, phosphorylated by CheA. Phosphorylation of the N-terminal regulatory domain activates the methylesterase activity.

Its subcellular location is the cytoplasm. It catalyses the reaction [protein]-L-glutamate 5-O-methyl ester + H2O = L-glutamyl-[protein] + methanol + H(+). The enzyme catalyses L-glutaminyl-[protein] + H2O = L-glutamyl-[protein] + NH4(+). Functionally, involved in chemotaxis. Part of a chemotaxis signal transduction system that modulates chemotaxis in response to various stimuli. Catalyzes the demethylation of specific methylglutamate residues introduced into the chemoreceptors (methyl-accepting chemotaxis proteins or MCP) by CheR. Also mediates the irreversible deamidation of specific glutamine residues to glutamic acid. This Pseudomonas aeruginosa (strain ATCC 15692 / DSM 22644 / CIP 104116 / JCM 14847 / LMG 12228 / 1C / PRS 101 / PAO1) protein is Protein-glutamate methylesterase/protein-glutamine glutaminase 1.